We begin with the raw amino-acid sequence, 559 residues long: Coiled-coil domain-containing protein 63 (559 aa).

Coiled-coil stretches lie at residues Glu-14–Thr-70, Glu-185–Ser-261, and Gln-364–Leu-414.

Its function is as follows. Plays a role in spermiogenesis. Involved in the elongation of flagella and the formation of sperm heads. The polypeptide is Coiled-coil domain-containing protein 63 (Rattus norvegicus (Rat)).